A 291-amino-acid polypeptide reads, in one-letter code: Ribosomal RNA small subunit methyltransferase A (291 aa).

S-adenosyl-L-methionine is bound by residues His21, Leu23, Gly48, Glu70, Asp95, and Asn115.

This sequence belongs to the class I-like SAM-binding methyltransferase superfamily. rRNA adenine N(6)-methyltransferase family. RsmA subfamily.

It is found in the cytoplasm. The catalysed reaction is adenosine(1518)/adenosine(1519) in 16S rRNA + 4 S-adenosyl-L-methionine = N(6)-dimethyladenosine(1518)/N(6)-dimethyladenosine(1519) in 16S rRNA + 4 S-adenosyl-L-homocysteine + 4 H(+). In terms of biological role, specifically dimethylates two adjacent adenosines (A1518 and A1519) in the loop of a conserved hairpin near the 3'-end of 16S rRNA in the 30S particle. May play a critical role in biogenesis of 30S subunits. In Prochlorococcus marinus (strain NATL1A), this protein is Ribosomal RNA small subunit methyltransferase A.